The primary structure comprises 396 residues: Putative N(4)-(beta-N-acetylglucosaminyl)-L-asparaginase GE19290 (396 aa).

Positions 1–23 (MKRHLKACLWVLCFASTALSSLA) are cleaved as a signal peptide. Disulfide bonds link Cys100-Cys105 and Cys199-Cys215. The active-site Nucleophile is Thr246. Substrate is bound by residues 274 to 277 (RVGD) and 297 to 300 (TGDG). Cysteines 357 and 384 form a disulfide.

It belongs to the Ntn-hydrolase family. Heterotetramer of two alpha and two beta chains arranged as a dimer of alpha/beta heterodimers. Cleaved into an alpha and beta chain by autocatalysis; this activates the enzyme. The N-terminal residue of the beta subunit is responsible for the nucleophile hydrolase activity.

The enzyme catalyses N(4)-(beta-N-acetyl-D-glucosaminyl)-L-asparagine + H2O = N-acetyl-beta-D-glucosaminylamine + L-aspartate + H(+). In terms of biological role, cleaves the GlcNAc-Asn bond which joins oligosaccharides to the peptide of asparagine-linked glycoproteins. In Drosophila yakuba (Fruit fly), this protein is Putative N(4)-(beta-N-acetylglucosaminyl)-L-asparaginase GE19290.